The primary structure comprises 75 residues: UPF0154 protein MMOB4450 (75 aa).

Residues 7–27 (IGLIVGLSILFTIVGLVVGFF) form a helical membrane-spanning segment.

The protein belongs to the UPF0154 family.

The protein resides in the cell membrane. In Mycoplasma mobile (strain ATCC 43663 / 163K / NCTC 11711) (Mesomycoplasma mobile), this protein is UPF0154 protein MMOB4450.